Here is a 198-residue protein sequence, read N- to C-terminus: Imidazoleglycerol-phosphate dehydratase (198 aa).

The protein belongs to the imidazoleglycerol-phosphate dehydratase family.

Its subcellular location is the cytoplasm. The enzyme catalyses D-erythro-1-(imidazol-4-yl)glycerol 3-phosphate = 3-(imidazol-4-yl)-2-oxopropyl phosphate + H2O. It participates in amino-acid biosynthesis; L-histidine biosynthesis; L-histidine from 5-phospho-alpha-D-ribose 1-diphosphate: step 6/9. The protein is Imidazoleglycerol-phosphate dehydratase of Herminiimonas arsenicoxydans.